A 553-amino-acid chain; its full sequence is Formate--tetrahydrofolate ligase (553 aa).

Residue 63 to 70 participates in ATP binding; it reads TPAGEGKS.

This sequence belongs to the formate--tetrahydrofolate ligase family.

It catalyses the reaction (6S)-5,6,7,8-tetrahydrofolate + formate + ATP = (6R)-10-formyltetrahydrofolate + ADP + phosphate. It functions in the pathway one-carbon metabolism; tetrahydrofolate interconversion. The chain is Formate--tetrahydrofolate ligase from Limosilactobacillus fermentum (strain NBRC 3956 / LMG 18251) (Lactobacillus fermentum).